A 356-amino-acid chain; its full sequence is Methylthioribose-1-phosphate isomerase (356 aa).

The active-site Proton donor is the aspartate 234.

This sequence belongs to the eIF-2B alpha/beta/delta subunits family. MtnA subfamily.

It localises to the cytoplasm. The protein resides in the nucleus. It catalyses the reaction 5-(methylsulfanyl)-alpha-D-ribose 1-phosphate = 5-(methylsulfanyl)-D-ribulose 1-phosphate. Its pathway is amino-acid biosynthesis; L-methionine biosynthesis via salvage pathway; L-methionine from S-methyl-5-thio-alpha-D-ribose 1-phosphate: step 1/6. Functionally, catalyzes the interconversion of methylthioribose-1-phosphate (MTR-1-P) into methylthioribulose-1-phosphate (MTRu-1-P). In Schizosaccharomyces japonicus (strain yFS275 / FY16936) (Fission yeast), this protein is Methylthioribose-1-phosphate isomerase (mri1).